We begin with the raw amino-acid sequence, 62 residues long: uncharacterized protein (62 aa).

The tract at residues 1 to 62 (MTSTQNLKDK…PPKKSLSQLP (62 aa)) is disordered. The segment covering 7 to 29 (LKDKFEEEIRQQKEGKGKKEKVW) has biased composition (basic and acidic residues). Positions 32–43 (HSDSSYNKQTAV) are enriched in polar residues.

This is an uncharacterized protein from Dictyostelium discoideum (Social amoeba).